The chain runs to 174 residues: Guided entry of tail-anchored proteins factor 1 (174 aa).

The Lumenal segment spans residues 1 to 8; sequence MSAAEADR. A helical transmembrane segment spans residues 9 to 29; it reads WAWLLVLSFVFGCNVLRILLP. Over 30 to 99 the chain is Cytoplasmic; sequence SFSFFMSRVL…VKARTAQLAK (70 aa). A coiled-coil region spans residues 39–94; the sequence is LQKDAEQESQMRAEIQGMKQELSTVNMMDEFARYARLERKINKMTDKLKTHVKART. The segment at 39 to 97 is interaction with GET3/TRC40; the sequence is LQKDAEQESQMRAEIQGMKQELSTVNMMDEFARYARLERKINKMTDKLKTHVKARTAQL. Residues 100–120 form a helical membrane-spanning segment; the sequence is IKWVISVAFYILQAALMVSLI. Over 121–148 the chain is Lumenal; sequence WKYYSVPVAVVPSKWITPLDRLVAFPTR. The chain crosses the membrane as a helical span at residues 149 to 169; it reads VAGGVGITCWILVCNKVVAIV. At 170-174 the chain is on the cytoplasmic side; the sequence is LHPFS.

The protein belongs to the WRB/GET1 family. As to quaternary structure, component of the Golgi to ER traffic (GET) complex, which is composed of GET1/WRB, CAMLG/GET2 and GET3. Within the complex, GET1 and CAMLG form a heterotetramer which is stabilized by phosphatidylinositol binding and which binds to the GET3 homodimer. Interacts with CAMLG (via C-terminus). GET3 shows a higher affinity for CAMLG than for GET1.

It localises to the endoplasmic reticulum membrane. Required for the post-translational delivery of tail-anchored (TA) proteins to the endoplasmic reticulum. Together with CAMLG/GET2, acts as a membrane receptor for soluble GET3/TRC40, which recognizes and selectively binds the transmembrane domain of TA proteins in the cytosol. Required to ensure correct topology and ER insertion of CAMLG. This is Guided entry of tail-anchored proteins factor 1 from Bos taurus (Bovine).